The chain runs to 185 residues: Ribosome-recycling factor (185 aa).

A disordered region spans residues 142–161; it reads LVKDGEAGEDEGARAEKELD.

This sequence belongs to the RRF family.

It is found in the cytoplasm. Responsible for the release of ribosomes from messenger RNA at the termination of protein biosynthesis. May increase the efficiency of translation by recycling ribosomes from one round of translation to another. This Paenarthrobacter aurescens (strain TC1) protein is Ribosome-recycling factor.